A 222-amino-acid polypeptide reads, in one-letter code: Vesicle transport v-SNARE 12 (222 aa).

N-acetylserine is present on S2. At 2 to 199 (SDVFEGYERQ…MSRRMTRNKW (198 aa)) the chain is on the cytoplasmic side. The stretch at 68–95 (KAVCLSKLREYKSDLNQLKKEFKRVSSA) forms a coiled coil. A helical; Anchor for type IV membrane protein transmembrane segment spans residues 200–220 (IITSVIVALVLAIILIISYKL). The Vesicular portion of the chain corresponds to 221–222 (SH).

It belongs to the VTI1 family. As to quaternary structure, forms SNARE complexes with the t-SNAREs SYP61 and either SYP41 or SYP42, and with a much lower affinity with SYP51 in the TGN. Also interacts with VPS45, a Sec1 protein, but not with SYP21 or SYP22. Binds to EPSIN2. Core constituent of the SNARE complex required for membrane fusion at the trans-Golgi network. Interacts with SCYL2B. As to expression, expressed in roots, stems, flowers and leaves.

The protein resides in the golgi apparatus. It is found in the trans-Golgi network membrane. It localises to the prevacuolar compartment membrane. The protein localises to the cell membrane. Its function is as follows. Together with either SYP41 or SYP61, required for membrane fusion; the fusion of phospholipid vesicles containing SYP41 or SYP61 and VTI12 is triggered by YKT61 and YKT62. Functions as a v-SNARE responsible for the docking or fusion of transport vesicles within the trans-Golgi network (TGN) and mediates liposome fusion. Necessary to deliver proteins to the protein storage vacuole (PSV). May be also involved in retrograde traffic to the cis-Golgi. The polypeptide is Vesicle transport v-SNARE 12 (Arabidopsis thaliana (Mouse-ear cress)).